A 185-amino-acid chain; its full sequence is uncharacterized protein (185 aa).

Transmembrane regions (helical) follow at residues 4 to 24 (IAWMIVFCEIAFWVVIVLGLA), 35 to 55 (GLLFLALTPVIDLILLAATGV), 60 to 80 (GASATAAHGIAAVYIGISIAY), 123 to 143 (VLAYLIGAGLLAGMIYFINDS), and 152 to 172 (ILKLWTVIIGIDFLITASYFI).

It is found in the cell membrane. This is an uncharacterized protein from Bacillus subtilis (strain 168).